Here is a 113-residue protein sequence, read N- to C-terminus: Large ribosomal subunit protein uL22 (113 aa).

Belongs to the universal ribosomal protein uL22 family. As to quaternary structure, part of the 50S ribosomal subunit.

Functionally, this protein binds specifically to 23S rRNA; its binding is stimulated by other ribosomal proteins, e.g. L4, L17, and L20. It is important during the early stages of 50S assembly. It makes multiple contacts with different domains of the 23S rRNA in the assembled 50S subunit and ribosome. In terms of biological role, the globular domain of the protein is located near the polypeptide exit tunnel on the outside of the subunit, while an extended beta-hairpin is found that lines the wall of the exit tunnel in the center of the 70S ribosome. The sequence is that of Large ribosomal subunit protein uL22 from Pelotomaculum thermopropionicum (strain DSM 13744 / JCM 10971 / SI).